Here is a 49-residue protein sequence, read N- to C-terminus: Large ribosomal subunit protein bL33B (49 aa).

It belongs to the bacterial ribosomal protein bL33 family.

This Lactobacillus helveticus (strain DPC 4571) protein is Large ribosomal subunit protein bL33B.